The chain runs to 296 residues: MNLNKDIATPARTNAILKKHGFTLKKSLGQNFLIDLNILAKIVEASGFDEQDGIVEIGPGIGALTEQLAKKADKVVAFEIDGRLIPVLEDTLSAYPNVKIIHSDVLKADLPGVLDAEFSKGQAIHVVANLPYYVTTPILMKLLEDRLPFKSITVMIQAEVAERIAAKPGSKEYGALSIAAQYYAEAKPMVVVPASVFVPQPRVDSSVLKLTIREKPLVEVIDERWFFNVFHASFANRRKTILNNLVHNLAGKDAKAAIEQALSEAGIDPKRRGETLSPQEFARLSDALYSTLRKAD.

Positions 31, 33, 58, 79, 104, and 129 each coordinate S-adenosyl-L-methionine.

Belongs to the class I-like SAM-binding methyltransferase superfamily. rRNA adenine N(6)-methyltransferase family. RsmA subfamily.

It localises to the cytoplasm. The enzyme catalyses adenosine(1518)/adenosine(1519) in 16S rRNA + 4 S-adenosyl-L-methionine = N(6)-dimethyladenosine(1518)/N(6)-dimethyladenosine(1519) in 16S rRNA + 4 S-adenosyl-L-homocysteine + 4 H(+). Functionally, specifically dimethylates two adjacent adenosines (A1518 and A1519) in the loop of a conserved hairpin near the 3'-end of 16S rRNA in the 30S particle. May play a critical role in biogenesis of 30S subunits. The chain is Ribosomal RNA small subunit methyltransferase A from Shouchella clausii (strain KSM-K16) (Alkalihalobacillus clausii).